The following is a 139-amino-acid chain: Peptide methionine sulfoxide reductase B4 (139 aa).

The residue at position 2 (Ala-2) is an N-acetylalanine. Residues Glu-12 to Ala-133 enclose the MsrB domain. Positions 51, 54, 97, and 100 each coordinate Zn(2+). Cysteines 69 and 122 form a disulfide. Catalysis depends on Cys-122, which acts as the Nucleophile.

It belongs to the MsrB Met sulfoxide reductase family. The cofactor is Zn(2+).

It is found in the cytoplasm. Its subcellular location is the cytosol. It catalyses the reaction L-methionyl-[protein] + [thioredoxin]-disulfide + H2O = L-methionyl-(R)-S-oxide-[protein] + [thioredoxin]-dithiol. Catalyzes the reduction of methionine sulfoxide (MetSO) to methionine in proteins. Plays a protective role against oxidative stress by restoring activity to proteins that have been inactivated by methionine oxidation. MSRB family specifically reduces the MetSO R-enantiomer. The sequence is that of Peptide methionine sulfoxide reductase B4 (MSRB4) from Arabidopsis thaliana (Mouse-ear cress).